Here is a 638-residue protein sequence, read N- to C-terminus: LIM domain kinase 2 (638 aa).

2 consecutive LIM zinc-binding domains span residues 12 to 63 (CQGC…CHKD) and 72 to 124 (CHGC…CGKC). The 88-residue stretch at 152–239 (HISMPATTEG…TLQLLIEHDP (88 aa)) folds into the PDZ domain. Residues 280 to 304 (RRRSLRRSNSISKSPGPSSPKEPLL) are disordered. Over residues 286 to 304 (RSNSISKSPGPSSPKEPLL) the composition is skewed to low complexity. Phosphoserine occurs at positions 293 and 298. The region spanning 331–608 (LIHGEVLGKG…DFFEALSLYL (278 aa)) is the Protein kinase domain. ATP is bound by residues 337–345 (LGKGFFGQA) and Asn360. Residue Asp451 is part of the active site. Thr505 carries the phosphothreonine; by ROCK1 and CDC42BP modification.

It belongs to the protein kinase superfamily. TKL Ser/Thr protein kinase family. In terms of assembly, binds ROCK1 and MARF1. Interacts with NISCH. In terms of processing, phosphorylated on serine and/or threonine residues by ROCK1.

The protein localises to the cytoplasm. It is found in the cytoskeleton. Its subcellular location is the spindle. It localises to the microtubule organizing center. The protein resides in the centrosome. The enzyme catalyses L-seryl-[protein] + ATP = O-phospho-L-seryl-[protein] + ADP + H(+). It catalyses the reaction L-threonyl-[protein] + ATP = O-phospho-L-threonyl-[protein] + ADP + H(+). Its function is as follows. Serine/threonine-protein kinase that plays an essential role in the regulation of actin filament dynamics. Acts downstream of several Rho family GTPase signal transduction pathways. Involved in astral microtubule organization and mitotic spindle orientation during early stages of mitosis by mediating phosphorylation of TPPP. Displays serine/threonine-specific phosphorylation of myelin basic protein and histone (MBP) in vitro. Suppresses ciliogenesis via multiple pathways; phosphorylation of CFL1, suppression of directional trafficking of ciliary vesicles to the ciliary base, and by facilitating YAP1 nuclear localization where it acts as a transcriptional corepressor of the TEAD4 target genes AURKA and PLK1. This chain is LIM domain kinase 2 (LIMK2), found in Bos taurus (Bovine).